Reading from the N-terminus, the 488-residue chain is Catalase (488 aa).

The tract at residues 1-24 (MTDRRNLTTNQGVPIGDNQNSMTA) is disordered. A compositionally biased stretch (polar residues) spans 7 to 23 (LTTNQGVPIGDNQNSMT). Active-site residues include histidine 55 and asparagine 128. Residue tyrosine 338 participates in heme binding.

Belongs to the catalase family. Heme is required as a cofactor.

The protein localises to the cytoplasm. The catalysed reaction is 2 H2O2 = O2 + 2 H2O. Functionally, decomposes hydrogen peroxide into water and oxygen; serves to protect cells from the toxic effects of hydrogen peroxide. The protein is Catalase (kat) of Listeria seeligeri.